The chain runs to 650 residues: FAS-associated factor 1 (650 aa).

The 57-residue stretch at 1 to 57 (MASNMDREMILADFQACTGIENIDEAITLLEQNNWDLVAAINGVIPQENGILQSEYG) folds into the UBA domain. The interval 62–87 (PGPAFNPASHPASAPTSSSSSAFRPV) is disordered. Positions 68-83 (PASHPASAPTSSSSSA) are enriched in low complexity. S320 bears the Phosphoserine mark. Residues 569–646 (NAEPVSKLRI…KLFPQETLFL (78 aa)) form the UBX domain. At T580 the chain carries Phosphothreonine. S582 bears the Phosphoserine mark.

In terms of assembly, interacts with CDT1 and ATPase VCP/p97. Interacts (via UBA domain) with FAS (via death domain). Interacts (via UBA domain) with NLRP12 (via DAPIN/PYRIN domain). Most abundant in testis, slightly less abundant in skeletal muscle and heart, followed by prostate, thymus, ovary, small intestine, and colon. Not detected in the peripheral blood leukocytes.

The protein localises to the nucleus. In terms of biological role, ubiquitin-binding protein. Required for the progression of DNA replication forks by targeting DNA replication licensing factor CDT1 for degradation. Potentiates but cannot initiate FAS-induced apoptosis. The polypeptide is FAS-associated factor 1 (FAF1) (Homo sapiens (Human)).